We begin with the raw amino-acid sequence, 442 residues long: Protoheme IX farnesyltransferase (442 aa).

Positions 1–167 (MGVYSLLVLG…AYVQLMKPRL (167 aa)) are unknown. A run of 11 helical transmembrane segments spans residues 49–69 (AAAL…RTGA), 76–96 (AVTL…YTAM), 106–126 (VHLT…AWTL), 167–187 (LMWL…SQLG), 194–214 (AATV…SGTF), 245–265 (LAFG…VNLL), 267–287 (AVLG…VLKP), 308–328 (WVAV…VIFL), 365–385 (HIVY…ELTG), 386–406 (LGPL…YFAI), and 421–441 (FHAS…DTMV). The tract at residues 168-439 (MWLLCLVAGA…CLLVAVVLDT (272 aa)) is prenyltransferase.

In the C-terminal section; belongs to the UbiA prenyltransferase family. Protoheme IX farnesyltransferase subfamily.

It is found in the cell membrane. The enzyme catalyses heme b + (2E,6E)-farnesyl diphosphate + H2O = Fe(II)-heme o + diphosphate. It participates in porphyrin-containing compound metabolism; heme O biosynthesis; heme O from protoheme: step 1/1. Functionally, converts heme B (protoheme IX) to heme O by substitution of the vinyl group on carbon 2 of heme B porphyrin ring with a hydroxyethyl farnesyl side group. The chain is Protoheme IX farnesyltransferase (ctaB) from Halobacterium salinarum (strain ATCC 700922 / JCM 11081 / NRC-1) (Halobacterium halobium).